The primary structure comprises 390 residues: MQFRSPLRRFDAFQKTVEDARIKTASGGLITLVSGLIVIFIVLMEWINYRRVIAVHEIIVNPSHGDRMEINFNITFPRIPCQILTVDVLDVSGEFQRDIHHTVSKTRLSPSGEIISVDDLDIGNQQSISDDGAAECGDCYGAADFAPEDTPGCCNTCDAVRDAYGKAHWRIGDVDAFKQCKDENFKELYEAQKVEGCNLAGQLSVNRMAGNFHIAPGRSTQNGNQHVHDTRDYINELDLHDMSHSIHHLSFGPPLDASVHYSNPLDGTVKKVSTADYRYEYFIKCVSYQFMPLSKSTLPIDTNKYAVTQHERSIRGGREEKVPTHVNFHGGIPGVWFQFDISPMRVIERQVRGNTFGGFLSNVLALLGGCVTLASFVDRGYYEVQKLKKN.

2 consecutive transmembrane segments (helical) span residues 27-47 (GGLI…MEWI) and 356-376 (FGGF…LASF).

This sequence belongs to the ERGIC family.

It localises to the membrane. This is an uncharacterized protein from Schizosaccharomyces pombe (strain 972 / ATCC 24843) (Fission yeast).